The primary structure comprises 117 residues: Ig heavy chain V region MOPC 47A (117 aa).

The Ig-like domain occupies 1–113 (EVKLVESGGG…FAYWGZGTLV (113 aa)).

The protein is Ig heavy chain V region MOPC 47A of Mus musculus (Mouse).